Reading from the N-terminus, the 332-residue chain is tRNA U34 carboxymethyltransferase (332 aa).

Carboxy-S-adenosyl-L-methionine-binding positions include Lys-91, Trp-105, Lys-110, Gly-130, Asp-152–Ser-154, Ile-181–Glu-182, Met-196, Tyr-200, and Arg-315.

It belongs to the class I-like SAM-binding methyltransferase superfamily. CmoB family. Homotetramer.

It catalyses the reaction carboxy-S-adenosyl-L-methionine + 5-hydroxyuridine(34) in tRNA = 5-carboxymethoxyuridine(34) in tRNA + S-adenosyl-L-homocysteine + H(+). Its function is as follows. Catalyzes carboxymethyl transfer from carboxy-S-adenosyl-L-methionine (Cx-SAM) to 5-hydroxyuridine (ho5U) to form 5-carboxymethoxyuridine (cmo5U) at position 34 in tRNAs. The sequence is that of tRNA U34 carboxymethyltransferase from Shewanella sp. (strain W3-18-1).